Consider the following 248-residue polypeptide: UDP-2,3-diacylglucosamine hydrolase (248 aa).

D7, H9, D40, N78, and H113 together coordinate Mn(2+). N78–R79 is a binding site for substrate. Substrate-binding residues include D121, S159, T163, K166, and H194. 2 residues coordinate Mn(2+): H194 and H196.

This sequence belongs to the LpxH family. It depends on Mn(2+) as a cofactor.

It localises to the cell inner membrane. It catalyses the reaction UDP-2-N,3-O-bis[(3R)-3-hydroxytetradecanoyl]-alpha-D-glucosamine + H2O = 2-N,3-O-bis[(3R)-3-hydroxytetradecanoyl]-alpha-D-glucosaminyl 1-phosphate + UMP + 2 H(+). Its pathway is glycolipid biosynthesis; lipid IV(A) biosynthesis; lipid IV(A) from (3R)-3-hydroxytetradecanoyl-[acyl-carrier-protein] and UDP-N-acetyl-alpha-D-glucosamine: step 4/6. Hydrolyzes the pyrophosphate bond of UDP-2,3-diacylglucosamine to yield 2,3-diacylglucosamine 1-phosphate (lipid X) and UMP by catalyzing the attack of water at the alpha-P atom. Involved in the biosynthesis of lipid A, a phosphorylated glycolipid that anchors the lipopolysaccharide to the outer membrane of the cell. This chain is UDP-2,3-diacylglucosamine hydrolase, found in Pseudomonas syringae pv. tomato (strain ATCC BAA-871 / DC3000).